The primary structure comprises 558 residues: Protein NRT1/ PTR FAMILY 2.7 (558 aa).

12 consecutive transmembrane segments (helical) span residues 31-51, 63-83, 90-110, 140-162, 178-198, 204-224, 319-339, 357-377, 399-419, 440-460, 479-499, and 518-538; these read FMIATLLGLTIAAWGWLLNLI, IAAAQIANIVSGCICMVPAVA, FFGTIPVISVSAFISLMGVAL, LGVLYTAITLASIGTGGTRFTLA, FFNWFFFTTYLAGAISATAIV, ISWTLGFGLSVAANFFSFLVF, IIPLALATIFLSTPIAMQLSL, IPAGSLQVITLLSTCLFIIVN, VGIGHAFNILSMAVTAIVEAK, VLWLFPPLVIVGIGEAFHFPG, SITSVVIGICFYTSTALIDLI, and VYWILVIGGVLNLGYFLVCSW.

Belongs to the major facilitator superfamily. Proton-dependent oligopeptide transporter (POT/PTR) (TC 2.A.17) family. In terms of tissue distribution, expressed in shoots and in the cortex of mature roots. Not expressed in root tip meristematic cells.

The protein localises to the cell membrane. Functionally, transporter involved in a passive nitrate efflux. Not competent for chloride transport. This chain is Protein NRT1/ PTR FAMILY 2.7 (NPF2.7), found in Arabidopsis thaliana (Mouse-ear cress).